The primary structure comprises 177 residues: ATP synthase subunit b, chloroplastic (177 aa).

The helical transmembrane segment at 26–44 threads the bilayer; that stretch reads IINLSIVLFVVIRFLGEAL.

It belongs to the ATPase B chain family. In terms of assembly, F-type ATPases have 2 components, F(1) - the catalytic core - and F(0) - the membrane proton channel. F(1) has five subunits: alpha(3), beta(3), gamma(1), delta(1), epsilon(1). F(0) has four main subunits: a(1), b(1), b'(1) and c(10-14). The alpha and beta chains form an alternating ring which encloses part of the gamma chain. F(1) is attached to F(0) by a central stalk formed by the gamma and epsilon chains, while a peripheral stalk is formed by the delta, b and b' chains.

Its subcellular location is the plastid. The protein resides in the chloroplast thylakoid membrane. Its function is as follows. F(1)F(0) ATP synthase produces ATP from ADP in the presence of a proton or sodium gradient. F-type ATPases consist of two structural domains, F(1) containing the extramembraneous catalytic core and F(0) containing the membrane proton channel, linked together by a central stalk and a peripheral stalk. During catalysis, ATP synthesis in the catalytic domain of F(1) is coupled via a rotary mechanism of the central stalk subunits to proton translocation. In terms of biological role, component of the F(0) channel, it forms part of the peripheral stalk, linking F(1) to F(0). The sequence is that of ATP synthase subunit b, chloroplastic from Bigelowiella natans (Pedinomonas minutissima).